The chain runs to 151 residues: Ribonuclease H (151 aa).

Residues 1 to 143 (MSDVVVIHTD…ADVLATRGLQ (143 aa)) form the RNase H type-1 domain. Mg(2+)-binding residues include Asp10, Glu49, Asp71, and Asp135.

It belongs to the RNase H family. As to quaternary structure, monomer. Mg(2+) is required as a cofactor.

The protein localises to the cytoplasm. It carries out the reaction Endonucleolytic cleavage to 5'-phosphomonoester.. Endonuclease that specifically degrades the RNA of RNA-DNA hybrids. In Mycolicibacterium gilvum (strain PYR-GCK) (Mycobacterium gilvum (strain PYR-GCK)), this protein is Ribonuclease H.